The sequence spans 520 residues: Tubby-related protein 2 (520 aa).

A phosphoserine mark is found at Ser-135 and Ser-190. The disordered stretch occupies residues 141 to 236 (EVSVENGSVS…GTNSSAAHNE (96 aa)). The segment covering 211 to 223 (QKEEDLEKKREAS) has biased composition (basic and acidic residues). Positions 224 to 233 (ESTGTNSSAA) are enriched in polar residues.

It belongs to the TUB family. Strongly expressed in testis. Also expressed in retina. Expressed in cancer cell lines.

Its subcellular location is the cytoplasm. The protein localises to the secreted. This Homo sapiens (Human) protein is Tubby-related protein 2 (TULP2).